The primary structure comprises 570 residues: uncharacterized protein (570 aa).

Residues 1 to 15 (MTESIISSRTASISS) show a composition bias toward low complexity. The tract at residues 1-34 (MTESIISSRTASISSKEGYEIRQGSTDSSSLDLE) is disordered. Ser14 bears the Phosphoserine mark. 12 consecutive transmembrane segments (helical) span residues 96-116 (WKLYIYLLLMLGFLDMMLFIG), 141-161 (NLNTLFYVGYIVGQFPGHYIM), 163-183 (TFPLGKFVGLVTFSWSVIVFL), 198-218 (FFLGFTESCLLPAMEATMGMF), 229-249 (PVFWISCLSCGIPAGFIAYGL), 261-281 (LFMIITGGITFFLSIFLFFYY), 328-348 (PITWLFTFAAFTLMLSNNLAY), 369-389 (VALAGYNTVSAIIATFAMYLI), 397-417 (AMFWMLPSITGGIAFVALPWS), 423-443 (LATMIIASDFGITYIIALGWT), 457-477 (GLMFMVGYAIANIISPQLWQS), and 485-505 (PAWIVQIVVAWFVTPIIYLVA).

It belongs to the major facilitator superfamily. Allantoate permease family.

The protein resides in the endoplasmic reticulum. The protein localises to the membrane. This is an uncharacterized protein from Schizosaccharomyces pombe (strain 972 / ATCC 24843) (Fission yeast).